The chain runs to 1390 residues: Bromodomain adjacent to zinc finger domain protein 2 (1390 aa).

Disordered stretches follow at residues 30–67, 178–215, and 235–269; these read AKIQ…QNEA, AKKK…AANN, and QKQQ…DVKN. A compositionally biased stretch (polar residues) spans 35–45; sequence ATASSPSKSTN. Low complexity-rich tracts occupy residues 46–63 and 186–215; these read GTSA…TSSS and ASTS…AANN. Residues 243 to 269 show a composition bias toward basic and acidic residues; sequence DTQKKADQAKKAKELAKQQQKEQDVKN. Residues 323–395 form the MBD domain; the sequence is KTNEAMLRLP…DNFLFNTKLV (73 aa). Residues 524 to 588 enclose the DDT domain; sequence SQGFADALMV…LRLALEFPGM (65 aa). Residues 705–724 show a composition bias toward basic and acidic residues; the sequence is KEEQNHESDSEPPTRPDTPK. Residues 705-729 are disordered; the sequence is KEEQNHESDSEPPTRPDTPKKATVA. Residues 1100 to 1149 form a PHD-type zinc finger; it reads EALCQICKSMDGDEMLVCDGCESGCHMECFRPRMTKVPEGDWFCQRCREE. A disordered region spans residues 1218–1241; it reads EERELEDDNHAENGENTKNGHMNG. The Bromo domain occupies 1273 to 1377; sequence LPKNMNKELC…KFFQKRWKQL (105 aa).

Belongs to the WAL family. As to quaternary structure, interacts with set-6. In terms of tissue distribution, broadly expressed in the nervous system, including head, body and tail neurons.

The protein localises to the nucleus. It localises to the chromosome. Its function is as follows. Chromatin reader protein, involved in positively modulating the rate of age-related behavioral deterioration. Positively modulates the level of global trimethylated 'Lys-9' of histone H3 (H3K9me3), but not of H3K9me2 or H3K9me1. May repress the expression of mitochondrial function-related genes by occupying their promoter regions, working in concert with histone methyltransferase, set-6. Involved in modulation of the mitochondrial unfolded protein response (UPR). Negatively regulates expression of bas-1, a serotonin (5-HT) and dopamine synthesizing enzyme (DOPA decarboxylase), with aging. Negatively modulates levels of endogenous 5-HT and dopamine with aging. Involved in modulating longevity, probably as a result of enhanced stress resistance via mechanisms related to dietary restriction and mitochondrial function. The protein is Bromodomain adjacent to zinc finger domain protein 2 of Caenorhabditis elegans.